We begin with the raw amino-acid sequence, 107 residues long: Phosphoribosyl-ATP pyrophosphatase (107 aa).

The protein belongs to the PRA-PH family.

The protein localises to the cytoplasm. It catalyses the reaction 1-(5-phospho-beta-D-ribosyl)-ATP + H2O = 1-(5-phospho-beta-D-ribosyl)-5'-AMP + diphosphate + H(+). It functions in the pathway amino-acid biosynthesis; L-histidine biosynthesis; L-histidine from 5-phospho-alpha-D-ribose 1-diphosphate: step 2/9. This Azoarcus sp. (strain BH72) protein is Phosphoribosyl-ATP pyrophosphatase.